A 212-amino-acid chain; its full sequence is Transcriptional regulator GfcR (212 aa).

The protein belongs to the purine/pyrimidine phosphoribosyltransferase family. GfcR subfamily.

Its function is as follows. DNA-binding transcriptional regulator that functions as a regulator of central sugar catabolic pathways. In Halobacterium salinarum (strain ATCC 29341 / DSM 671 / R1), this protein is Transcriptional regulator GfcR.